The chain runs to 77 residues: U8-lycotoxin-Ls1m (77 aa).

The first 20 residues, 1–20, serve as a signal peptide directing secretion; it reads MKLMIFTGLFLFAIVSLIEA. A propeptide spanning residues 21 to 26 is cleaved from the precursor; it reads QAENEK.

Belongs to the neurotoxin 19 (CSTX) family. 08 (U8-Lctx) subfamily. In terms of processing, contains 4 disulfide bonds. In terms of tissue distribution, expressed by the venom gland.

The protein resides in the secreted. This Lycosa singoriensis (Wolf spider) protein is U8-lycotoxin-Ls1m.